A 579-amino-acid polypeptide reads, in one-letter code: Laccase-4 (579 aa).

The first 28 residues, 1–28, serve as a signal peptide directing secretion; sequence MTMAISSALPSPLLLAASLLLLIVQAQG. Plastocyanin-like domains follow at residues 36 to 152 and 162 to 316; these read NVQM…PKLG and KEVP…YENP. Asn-41 and Asn-82 each carry an N-linked (GlcNAc...) asparagine glycan. Residues His-86 and His-88 each contribute to the Cu cation site. Asn-118 carries an N-linked (GlcNAc...) asparagine glycan. Residues His-131 and His-133 each coordinate Cu cation. Residues Asn-191, Asn-207, Asn-243, Asn-304, Asn-340, Asn-347, Asn-386, Asn-393, Asn-403, Asn-439, Asn-446, and Asn-462 are each glycosylated (N-linked (GlcNAc...) asparagine). The Plastocyanin-like 3 domain maps to 429-563; sequence DFPVAPLSPF…RMAWLVLDGS (135 aa). Residues His-480, His-483, His-485, His-542, Cys-543, His-544, and His-548 each contribute to the Cu cation site.

The protein belongs to the multicopper oxidase family. It depends on Cu cation as a cofactor.

It localises to the secreted. The protein localises to the extracellular space. Its subcellular location is the apoplast. It catalyses the reaction 4 hydroquinone + O2 = 4 benzosemiquinone + 2 H2O. Lignin degradation and detoxification of lignin-derived products. The polypeptide is Laccase-4 (LAC4) (Oryza sativa subsp. japonica (Rice)).